The sequence spans 620 residues: Protein translocase subunit SecD (620 aa).

Transmembrane regions (helical) follow at residues 10 to 30 (YLLI…NLYP), 464 to 484 (LWGM…FGVI), 488 to 507 (ALAF…GATL), 511 to 533 (GIAG…FSRI), 555 to 575 (FTAI…LYAM), and 582 to 602 (GFAV…IMVT).

It belongs to the SecD/SecF family. SecD subfamily. In terms of assembly, forms a complex with SecF. Part of the essential Sec protein translocation apparatus which comprises SecA, SecYEG and auxiliary proteins SecDF-YajC and YidC.

The protein resides in the cell inner membrane. Part of the Sec protein translocase complex. Interacts with the SecYEG preprotein conducting channel. SecDF uses the proton motive force (PMF) to complete protein translocation after the ATP-dependent function of SecA. The polypeptide is Protein translocase subunit SecD (Pseudomonas aeruginosa (strain ATCC 15692 / DSM 22644 / CIP 104116 / JCM 14847 / LMG 12228 / 1C / PRS 101 / PAO1)).